Consider the following 256-residue polypeptide: Thiazole synthase (256 aa).

Lys96 functions as the Schiff-base intermediate with DXP in the catalytic mechanism. 1-deoxy-D-xylulose 5-phosphate is bound by residues Gly157, 184–185 (AG), and 206–207 (NT).

This sequence belongs to the ThiG family. As to quaternary structure, homotetramer. Forms heterodimers with either ThiH or ThiS.

It localises to the cytoplasm. The catalysed reaction is [ThiS sulfur-carrier protein]-C-terminal-Gly-aminoethanethioate + 2-iminoacetate + 1-deoxy-D-xylulose 5-phosphate = [ThiS sulfur-carrier protein]-C-terminal Gly-Gly + 2-[(2R,5Z)-2-carboxy-4-methylthiazol-5(2H)-ylidene]ethyl phosphate + 2 H2O + H(+). It functions in the pathway cofactor biosynthesis; thiamine diphosphate biosynthesis. Functionally, catalyzes the rearrangement of 1-deoxy-D-xylulose 5-phosphate (DXP) to produce the thiazole phosphate moiety of thiamine. Sulfur is provided by the thiocarboxylate moiety of the carrier protein ThiS. In vitro, sulfur can be provided by H(2)S. In Bartonella tribocorum (strain CIP 105476 / IBS 506), this protein is Thiazole synthase.